The chain runs to 553 residues: Dihydroxy-acid dehydratase (553 aa).

Aspartate 78 provides a ligand contact to Mg(2+). Cysteine 119 is a [2Fe-2S] cluster binding site. Positions 120 and 121 each coordinate Mg(2+). The residue at position 121 (lysine 121) is an N6-carboxylysine. Cysteine 193 contributes to the [2Fe-2S] cluster binding site. A Mg(2+)-binding site is contributed by glutamate 441. Residue serine 467 is the Proton acceptor of the active site.

It belongs to the IlvD/Edd family. In terms of assembly, homodimer. It depends on [2Fe-2S] cluster as a cofactor. Requires Mg(2+) as cofactor.

It catalyses the reaction (2R)-2,3-dihydroxy-3-methylbutanoate = 3-methyl-2-oxobutanoate + H2O. The enzyme catalyses (2R,3R)-2,3-dihydroxy-3-methylpentanoate = (S)-3-methyl-2-oxopentanoate + H2O. The protein operates within amino-acid biosynthesis; L-isoleucine biosynthesis; L-isoleucine from 2-oxobutanoate: step 3/4. It participates in amino-acid biosynthesis; L-valine biosynthesis; L-valine from pyruvate: step 3/4. In terms of biological role, functions in the biosynthesis of branched-chain amino acids. Catalyzes the dehydration of (2R,3R)-2,3-dihydroxy-3-methylpentanoate (2,3-dihydroxy-3-methylvalerate) into 2-oxo-3-methylpentanoate (2-oxo-3-methylvalerate) and of (2R)-2,3-dihydroxy-3-methylbutanoate (2,3-dihydroxyisovalerate) into 2-oxo-3-methylbutanoate (2-oxoisovalerate), the penultimate precursor to L-isoleucine and L-valine, respectively. This Geobacter metallireducens (strain ATCC 53774 / DSM 7210 / GS-15) protein is Dihydroxy-acid dehydratase.